Reading from the N-terminus, the 304-residue chain is Probable porphobilinogen deaminase (304 aa).

Residue Cys240 is modified to S-(dipyrrolylmethanemethyl)cysteine.

The protein belongs to the HMBS family. Dipyrromethane is required as a cofactor.

The catalysed reaction is 4 porphobilinogen + H2O = hydroxymethylbilane + 4 NH4(+). It participates in porphyrin-containing compound metabolism; protoporphyrin-IX biosynthesis; coproporphyrinogen-III from 5-aminolevulinate: step 2/4. In terms of biological role, tetrapolymerization of the monopyrrole PBG into the hydroxymethylbilane pre-uroporphyrinogen in several discrete steps. This chain is Probable porphobilinogen deaminase, found in Ignicoccus hospitalis (strain KIN4/I / DSM 18386 / JCM 14125).